Here is a 378-residue protein sequence, read N- to C-terminus: Cytochrome b (378 aa).

Transmembrane regions (helical) follow at residues 34 to 54 (FGSL…FLSM), 78 to 100 (WLLR…CHIG), 113 to 133 (TWNV…VGYV), and 179 to 199 (FFSF…VHLL). Heme b is bound by residues His84 and His98. Residues His183 and His197 each coordinate heme b. His202 lines the a ubiquinone pocket. Helical transmembrane passes span 225-245 (YSTK…IVVL), 289-306 (LGGV…FCLP), 313-342 (KFRS…WIGM), and 350-369 (IFIG…LNPL).

This sequence belongs to the cytochrome b family. In terms of assembly, the main subunits of complex b-c1 are: cytochrome b, cytochrome c1 and the Rieske protein. Heme b is required as a cofactor.

It localises to the mitochondrion inner membrane. Its function is as follows. Component of the ubiquinol-cytochrome c reductase complex (complex III or cytochrome b-c1 complex) that is part of the mitochondrial respiratory chain. The b-c1 complex mediates electron transfer from ubiquinol to cytochrome c. Contributes to the generation of a proton gradient across the mitochondrial membrane that is then used for ATP synthesis. This Loxocorone allax (Goblet worm) protein is Cytochrome b (mt:Cyt-b).